Consider the following 199-residue polypeptide: N-(5'-phosphoribosyl)anthranilate isomerase (199 aa).

Belongs to the TrpF family.

It catalyses the reaction N-(5-phospho-beta-D-ribosyl)anthranilate = 1-(2-carboxyphenylamino)-1-deoxy-D-ribulose 5-phosphate. The protein operates within amino-acid biosynthesis; L-tryptophan biosynthesis; L-tryptophan from chorismate: step 3/5. In Clostridium kluyveri (strain NBRC 12016), this protein is N-(5'-phosphoribosyl)anthranilate isomerase.